We begin with the raw amino-acid sequence, 279 residues long: Inorganic pyrophosphatase (279 aa).

Arg100 is a binding site for diphosphate. Mg(2+)-binding residues include Asp132, Asp137, and Asp169.

This sequence belongs to the PPase family. Mg(2+) serves as cofactor.

The catalysed reaction is diphosphate + H2O = 2 phosphate + H(+). This is Inorganic pyrophosphatase (ppa1) from Dictyostelium discoideum (Social amoeba).